Reading from the N-terminus, the 271-residue chain is Protein MGF 360-15R (271 aa).

Belongs to the asfivirus MGF 360 family.

In terms of biological role, plays a role in virus cell tropism, and may be required for efficient virus replication in macrophages. This is Protein MGF 360-15R from African swine fever virus (isolate Tick/Malawi/Lil 20-1/1983) (ASFV).